The primary structure comprises 443 residues: Probable glycine dehydrogenase (decarboxylating) subunit 1 (443 aa).

This sequence belongs to the GcvP family. N-terminal subunit subfamily. In terms of assembly, the glycine cleavage system is composed of four proteins: P, T, L and H. In this organism, the P 'protein' is a heterodimer of two subunits.

The catalysed reaction is N(6)-[(R)-lipoyl]-L-lysyl-[glycine-cleavage complex H protein] + glycine + H(+) = N(6)-[(R)-S(8)-aminomethyldihydrolipoyl]-L-lysyl-[glycine-cleavage complex H protein] + CO2. In terms of biological role, the glycine cleavage system catalyzes the degradation of glycine. The P protein binds the alpha-amino group of glycine through its pyridoxal phosphate cofactor; CO(2) is released and the remaining methylamine moiety is then transferred to the lipoamide cofactor of the H protein. This is Probable glycine dehydrogenase (decarboxylating) subunit 1 from Nitratidesulfovibrio vulgaris (strain ATCC 29579 / DSM 644 / CCUG 34227 / NCIMB 8303 / VKM B-1760 / Hildenborough) (Desulfovibrio vulgaris).